Consider the following 338-residue polypeptide: Anthocyanidin reductase ((2S)-flavan-3-ol-forming) (338 aa).

NADP(+)-binding positions include 18–21 (TGFV), Lys-48, 87–90 (VATP), and Tyr-168.

The protein belongs to the NAD(P)-dependent epimerase/dehydratase family. Dihydroflavonol-4-reductase subfamily. Expressed in seeds, grape skins, flowers and leaves.

It carries out the reaction a (2S,3R)-flavan-3-ol + 2 NADP(+) = an anthocyanidin with a 3-hydroxy group + 2 NADPH + 2 H(+). The enzyme catalyses a (2S,3S)-flavan-3-ol + 2 NADP(+) = an anthocyanidin with a 3-hydroxy group + 2 NADPH + 2 H(+). Its pathway is secondary metabolite biosynthesis; flavonoid biosynthesis. Its activity is regulated as follows. Inhibited at NaCl concentrations higher than 200 mM. In terms of biological role, produces the terminal flavan-3-ol monomers required for the formation of proanthocyanidins or condensed tannins in leaves and flowers, as well as in the skin and seeds of developing berries. Behaves as a reductase and as a C-3 epimerase. Catalyzes the double reduction of anthocyanidins, producing a mixture of (2S,3S)- and (2S,3R)-flavan-3-ols. The enzyme catalyzes sequential hydride transfers to C-2 and C-4, respectively and epimerization at C-3 is achieved by tautomerization that occurs between the two hydride transfers. Converts cyanidin, pelargonidin and delphinidin into catechin and epicatechin, afzelechin and epiafzelechin, and gallocatechin and epigallocatechin respectively. The polypeptide is Anthocyanidin reductase ((2S)-flavan-3-ol-forming) (Vitis vinifera (Grape)).